The chain runs to 425 residues: GTPase Obg (425 aa).

The 158-residue stretch at 1–158 (MFKDYAKIHV…LWLELELKLL (158 aa)) folds into the Obg domain. One can recognise an OBG-type G domain in the interval 159 to 329 (ADVGLVGFPN…LIYRTYRLLE (171 aa)). Residues 165–172 (GFPNAGKS), 190–194 (FTTLE), 212–215 (DIPG), 282–285 (NKTD), and 310–312 (SAL) contribute to the GTP site. Residues serine 172 and threonine 192 each contribute to the Mg(2+) site. Residues 341 to 421 (VPDERETDVT…IGRFEFEYSE (81 aa)) form the OCT domain.

It belongs to the TRAFAC class OBG-HflX-like GTPase superfamily. OBG GTPase family. Monomer. Mg(2+) serves as cofactor.

Its subcellular location is the cytoplasm. In terms of biological role, an essential GTPase which binds GTP, GDP and possibly (p)ppGpp with moderate affinity, with high nucleotide exchange rates and a fairly low GTP hydrolysis rate. Plays a role in control of the cell cycle, stress response, ribosome biogenesis and in those bacteria that undergo differentiation, in morphogenesis control. The sequence is that of GTPase Obg from Desulforudis audaxviator (strain MP104C).